The chain runs to 400 residues: Elongation factor Tu (400 aa).

The 199-residue stretch at 10 to 208 folds into the tr-type G domain; sequence KPHLNVGTIG…TMDEYFPEPQ (199 aa). The tract at residues 19 to 26 is G1; it reads GHIDHGKT. 19–26 is a GTP binding site; that stretch reads GHIDHGKT. Thr26 lines the Mg(2+) pocket. A G2 region spans residues 60–64; the sequence is GITIN. A G3 region spans residues 81–84; it reads DCPG. GTP is bound by residues 81 to 85 and 136 to 139; these read DCPGH and NKTD. Residues 136 to 139 are G4; the sequence is NKTD. The interval 174–176 is G5; that stretch reads SAL.

This sequence belongs to the TRAFAC class translation factor GTPase superfamily. Classic translation factor GTPase family. EF-Tu/EF-1A subfamily. Monomer.

The protein localises to the cytoplasm. It carries out the reaction GTP + H2O = GDP + phosphate + H(+). Functionally, GTP hydrolase that promotes the GTP-dependent binding of aminoacyl-tRNA to the A-site of ribosomes during protein biosynthesis. This chain is Elongation factor Tu, found in Thermosipho melanesiensis (strain DSM 12029 / CIP 104789 / BI429).